The chain runs to 494 residues: GTPase Der (494 aa).

EngA-type G domains lie at Pro3 to Lys166 and Ile208 to Thr381. Residues Gly9 to Ser16, Asp56 to Ile60, Asn118 to Asp121, Gly214 to Ser221, Asp261 to Val265, and Asn326 to Asp329 contribute to the GTP site. The KH-like domain occupies Arg382–Glu466.

It belongs to the TRAFAC class TrmE-Era-EngA-EngB-Septin-like GTPase superfamily. EngA (Der) GTPase family. Associates with the 50S ribosomal subunit.

GTPase that plays an essential role in the late steps of ribosome biogenesis. This Serratia proteamaculans (strain 568) protein is GTPase Der.